The primary structure comprises 110 residues: MHELSIARSVVDICTENAGGRRVCSVTIEIGALSGVATESIRFCFDACTRGTLLENALLLIEHVPASGRCRQCNSEFPVKACYDPCPACGGVGMDLITGEELRVKGLTVV.

Residue H2 participates in Ni(2+) binding. 4 residues coordinate Zn(2+): C70, C73, C86, and C89.

The protein belongs to the HypA/HybF family.

Functionally, involved in the maturation of [NiFe] hydrogenases. Required for nickel insertion into the metal center of the hydrogenase. This chain is Hydrogenase maturation factor HypA, found in Geotalea daltonii (strain DSM 22248 / JCM 15807 / FRC-32) (Geobacter daltonii).